Reading from the N-terminus, the 662-residue chain is Glycogen debranching enzyme (662 aa).

The active-site Nucleophile is the Asp-338. Catalysis depends on Glu-373, which acts as the Proton donor.

This sequence belongs to the glycosyl hydrolase 13 family.

It carries out the reaction Hydrolysis of (1-&gt;6)-alpha-D-glucosidic linkages to branches with degrees of polymerization of three or four glucose residues in limit dextrin.. Its pathway is glycan degradation; glycogen degradation. Removes maltotriose and maltotetraose chains that are attached by 1,6-alpha-linkage to the limit dextrin main chain, generating a debranched limit dextrin. This is Glycogen debranching enzyme from Yersinia pseudotuberculosis serotype IB (strain PB1/+).